The primary structure comprises 224 residues: Biosynthetic peptidoglycan transglycosylase (224 aa).

Residues 9-29 (VLILVSFVLLIQLWIFCSLAW) traverse the membrane as a helical segment.

This sequence belongs to the glycosyltransferase 51 family.

The protein resides in the cell inner membrane. The enzyme catalyses [GlcNAc-(1-&gt;4)-Mur2Ac(oyl-L-Ala-gamma-D-Glu-L-Lys-D-Ala-D-Ala)](n)-di-trans,octa-cis-undecaprenyl diphosphate + beta-D-GlcNAc-(1-&gt;4)-Mur2Ac(oyl-L-Ala-gamma-D-Glu-L-Lys-D-Ala-D-Ala)-di-trans,octa-cis-undecaprenyl diphosphate = [GlcNAc-(1-&gt;4)-Mur2Ac(oyl-L-Ala-gamma-D-Glu-L-Lys-D-Ala-D-Ala)](n+1)-di-trans,octa-cis-undecaprenyl diphosphate + di-trans,octa-cis-undecaprenyl diphosphate + H(+). It functions in the pathway cell wall biogenesis; peptidoglycan biosynthesis. Its function is as follows. Peptidoglycan polymerase that catalyzes glycan chain elongation from lipid-linked precursors. This Acinetobacter baylyi (strain ATCC 33305 / BD413 / ADP1) protein is Biosynthetic peptidoglycan transglycosylase.